We begin with the raw amino-acid sequence, 330 residues long: Aspartate--ammonia ligase (330 aa).

Belongs to the class-II aminoacyl-tRNA synthetase family. AsnA subfamily.

The protein localises to the cytoplasm. The enzyme catalyses L-aspartate + NH4(+) + ATP = L-asparagine + AMP + diphosphate + H(+). It functions in the pathway amino-acid biosynthesis; L-asparagine biosynthesis; L-asparagine from L-aspartate (ammonia route): step 1/1. In Salmonella paratyphi A (strain ATCC 9150 / SARB42), this protein is Aspartate--ammonia ligase.